Reading from the N-terminus, the 326-residue chain is Dipeptide transport ATP-binding protein DppD (326 aa).

An ABC transporter domain is found at Ile5–Ile255. Residues Ala44–Thr49, Asn61, and Gln97 contribute to the ATP site. Residues Cys285, Cys291, Cys298, and Cys316 each contribute to the [4Fe-4S] cluster site.

It belongs to the ABC transporter superfamily.

Its subcellular location is the cell membrane. The enzyme catalyses a dipeptide(out) + ATP + H2O = a dipeptide(in) + ADP + phosphate + H(+). Its activity is regulated as follows. The C-terminal iron-sulfur cluster may stabilize the structure of the C-terminal loops and may function in the regulation of the transport process. In terms of biological role, part of the ABC transporter Dpp involved in dipeptide transport. Responsible for energy coupling to the transport system. The chain is Dipeptide transport ATP-binding protein DppD from Caldanaerobacter subterraneus subsp. tengcongensis (strain DSM 15242 / JCM 11007 / NBRC 100824 / MB4) (Thermoanaerobacter tengcongensis).